The chain runs to 548 residues: Beta-lactamase-like protein 2 (548 aa).

A signal peptide spans 1–24; sequence MKIMNKQSITIFLIICFLINLILS. Residues Asn237, Asn258, Asn443, and Asn459 are each glycosylated (N-linked (GlcNAc...) asparagine).

It belongs to the beta-lactamase family.

The protein localises to the secreted. This chain is Beta-lactamase-like protein 2, found in Dictyostelium discoideum (Social amoeba).